Consider the following 122-residue polypeptide: Large ribosomal subunit protein uL14 (122 aa).

The protein belongs to the universal ribosomal protein uL14 family. In terms of assembly, part of the 50S ribosomal subunit. Forms a cluster with proteins L3 and L19. In the 70S ribosome, L14 and L19 interact and together make contacts with the 16S rRNA in bridges B5 and B8.

Its function is as follows. Binds to 23S rRNA. Forms part of two intersubunit bridges in the 70S ribosome. The sequence is that of Large ribosomal subunit protein uL14 from Lawsonia intracellularis (strain PHE/MN1-00).